The primary structure comprises 225 residues: Small ribosomal subunit protein uS3 (225 aa).

The KH type-2 domain occupies 38–106 (IRKFIQSRFS…PVNLNIIEVK (69 aa)).

This sequence belongs to the universal ribosomal protein uS3 family. Part of the 30S ribosomal subunit. Forms a tight complex with proteins S10 and S14.

Binds the lower part of the 30S subunit head. Binds mRNA in the 70S ribosome, positioning it for translation. The polypeptide is Small ribosomal subunit protein uS3 (Leptospira borgpetersenii serovar Hardjo-bovis (strain JB197)).